Consider the following 616-residue polypeptide: UvrABC system protein C (616 aa).

Positions 12–97 (NDAGVYQYFD…IKQLKPKYNI (86 aa)) constitute a GIY-YIG domain. Positions 203–238 (TKLISKLNEKMLQYSNDFRFEEAMTLRDRIKTIEKS) constitute a UVR domain.

This sequence belongs to the UvrC family. In terms of assembly, interacts with UvrB in an incision complex.

It localises to the cytoplasm. Functionally, the UvrABC repair system catalyzes the recognition and processing of DNA lesions. UvrC both incises the 5' and 3' sides of the lesion. The N-terminal half is responsible for the 3' incision and the C-terminal half is responsible for the 5' incision. This chain is UvrABC system protein C, found in Aliarcobacter butzleri (strain RM4018) (Arcobacter butzleri).